Consider the following 233-residue polypeptide: Eosinophil granule major basic protein 1 (233 aa).

Positions 1–15 (MKLLLLLALLLGAVS) are cleaved as a signal peptide. A propeptide spans 16 to 114 (TRHLKVDTSS…VKFFSRPGYK (99 aa)) (acidic). Residues 24–96 (SSLQSLRGEE…SELDVSPEDI (73 aa)) form a disordered region. The span at 42 to 57 (AEGATREATAGALMPL) shows a compositional bias: low complexity. A compositionally biased stretch (acidic residues) spans 58–93 (PEEEEMEGASGSEDDPEEEEEEEEEVEFSSELDVSP). Residues 132-233 (WVCQRCYRGN…GKRRPFVCTY (102 aa)) form the C-type lectin domain. 2 disulfides stabilise this stretch: cysteine 134–cysteine 231 and cysteine 208–cysteine 223.

In terms of processing, nitrated.

The protein localises to the cytoplasmic granule. Its function is as follows. MBP may play some important roles in the allergic reactions and inflammations, since MBP is capable of releasing histamine from mast cells and damaging the epithelial cells of bronchial tubes. Antiparasitic and antibiotic. The chain is Eosinophil granule major basic protein 1 (MBP1) from Cavia porcellus (Guinea pig).